The following is a 413-amino-acid chain: Probable protein phosphatase 2C 78 (413 aa).

The disordered stretch occupies residues 21-40 (KKATTTTRRRERSSSQAARR). A PPM-type phosphatase domain is found at 111-409 (KYGVASVCGR…DNVSVVVVDL (299 aa)). Residues Asp-153, Gly-154, Asp-327, and Asp-400 each coordinate Mn(2+).

This sequence belongs to the PP2C family. Mg(2+) is required as a cofactor. Requires Mn(2+) as cofactor.

It localises to the golgi apparatus. It is found in the nucleus. It catalyses the reaction O-phospho-L-seryl-[protein] + H2O = L-seryl-[protein] + phosphate. The catalysed reaction is O-phospho-L-threonyl-[protein] + H2O = L-threonyl-[protein] + phosphate. Functionally, acts as a negative regulator of abscisic acid (ABA) signaling for stomatal closure in leaves, and controls water loss during leaf senescence. Activated by the NAC029/NAP transcription factor during ABA signaling in senescing leaves. Functions as a negative regulator of osmotic stress and ABA signaling. Acts as a negative regulator of response to drought. The sequence is that of Probable protein phosphatase 2C 78 from Arabidopsis thaliana (Mouse-ear cress).